The chain runs to 591 residues: V-type ATP synthase alpha chain (591 aa).

231–238 (GPFGSGKT) provides a ligand contact to ATP.

The protein belongs to the ATPase alpha/beta chains family.

It carries out the reaction ATP + H2O + 4 H(+)(in) = ADP + phosphate + 5 H(+)(out). Its function is as follows. Produces ATP from ADP in the presence of a proton gradient across the membrane. The V-type alpha chain is a catalytic subunit. This Clostridium novyi (strain NT) protein is V-type ATP synthase alpha chain.